The primary structure comprises 89 residues: Small ribosomal subunit protein uS15 (89 aa).

Basic and acidic residues predominate over residues 1–21 (MVMTAEDKAQVIGEHKKHDGD). The tract at residues 1-24 (MVMTAEDKAQVIGEHKKHDGDTGS) is disordered.

This sequence belongs to the universal ribosomal protein uS15 family. In terms of assembly, part of the 30S ribosomal subunit. Forms a bridge to the 50S subunit in the 70S ribosome, contacting the 23S rRNA.

In terms of biological role, one of the primary rRNA binding proteins, it binds directly to 16S rRNA where it helps nucleate assembly of the platform of the 30S subunit by binding and bridging several RNA helices of the 16S rRNA. Forms an intersubunit bridge (bridge B4) with the 23S rRNA of the 50S subunit in the ribosome. The polypeptide is Small ribosomal subunit protein uS15 (Solidesulfovibrio magneticus (strain ATCC 700980 / DSM 13731 / RS-1) (Desulfovibrio magneticus)).